Here is a 492-residue protein sequence, read N- to C-terminus: NAD(P)H-quinone oxidoreductase subunit 2 A, chloroplastic (492 aa).

13 helical membrane passes run 6-26 (LLLF…GLIL), 39-59 (TPWL…ALLF), 81-101 (VFQF…VEYI), 106-126 (MAIT…MFLC), 131-151 (LITI…LSGY), 165-185 (YLLM…WLYG), 209-229 (PGIS…LSPA), 277-297 (WHLL…LIAI), 305-325 (MLAY…IVGD), 329-349 (GYAS…GTFA), 377-397 (ALSS…AGFF), 400-420 (LHLF…IGLL), and 466-486 (MIVC…IIAI).

The protein belongs to the complex I subunit 2 family. As to quaternary structure, NDH is composed of at least 16 different subunits, 5 of which are encoded in the nucleus.

It localises to the plastid. The protein resides in the chloroplast thylakoid membrane. It catalyses the reaction a plastoquinone + NADH + (n+1) H(+)(in) = a plastoquinol + NAD(+) + n H(+)(out). It carries out the reaction a plastoquinone + NADPH + (n+1) H(+)(in) = a plastoquinol + NADP(+) + n H(+)(out). Its function is as follows. NDH shuttles electrons from NAD(P)H:plastoquinone, via FMN and iron-sulfur (Fe-S) centers, to quinones in the photosynthetic chain and possibly in a chloroplast respiratory chain. The immediate electron acceptor for the enzyme in this species is believed to be plastoquinone. Couples the redox reaction to proton translocation, and thus conserves the redox energy in a proton gradient. The sequence is that of NAD(P)H-quinone oxidoreductase subunit 2 A, chloroplastic from Illicium oligandrum (Star anise).